Consider the following 276-residue polypeptide: tRNA (guanine-N(7)-)-methyltransferase (276 aa).

Residues 1–36 form a disordered region; sequence MAAETRNVAGAEAPPPQKRYYRQRAHSNPMADHTLR. Ala2 carries the N-acetylalanine modification. Ser27 is subject to Phosphoserine; by PKB/AKT1 and RPS6KA3. The S-adenosyl-L-homocysteine site is built by Gly84, Glu107, Ile108, Arg109, Asn140, Ala141, and Leu160. The S-adenosyl-L-methionine site is built by Gly84 and Glu107. S-adenosyl-L-methionine contacts are provided by Arg109, Asn140, Ala141, and Leu160. Asp163 is an active-site residue. An alphaC helix region spans residues 164–172; it reads PHFKRTKHK. The S-adenosyl-L-homocysteine site is built by Thr238 and Glu240. Residues Thr238 and Glu240 each coordinate S-adenosyl-L-methionine. Positions 238-246 are alpha6 helix; sequence TEEGKKVLR.

This sequence belongs to the class I-like SAM-binding methyltransferase superfamily. TrmB family. In terms of assembly, catalytic component of the METTL1-WDR4 complex, composed of METTL1 and WDR4. Post-translationally, phosphorylation at Ser-27 by PKB/AKT1 inactivates its methyltransferase activity via a steric interference mechanism in the active site that locally disrupts the catalytic center. Phosphorylation at Ser-27 does not affect the interaction with WDR4. In terms of tissue distribution, ubiquitous.

Its subcellular location is the nucleus. The catalysed reaction is guanosine(46) in tRNA + S-adenosyl-L-methionine = N(7)-methylguanosine(46) in tRNA + S-adenosyl-L-homocysteine. It carries out the reaction a guanosine in mRNA + S-adenosyl-L-methionine = an N(7)-methylguanosine in mRNA + S-adenosyl-L-homocysteine. It catalyses the reaction a guanosine in miRNA + S-adenosyl-L-methionine = an N(7)-methylguanosine in miRNA + S-adenosyl-L-homocysteine. It participates in tRNA modification; N(7)-methylguanine-tRNA biosynthesis. Catalytic component of METTL1-WDR4 methyltransferase complex that mediates the formation of N(7)-methylguanine in a subset of RNA species, such as tRNAs, mRNAs and microRNAs (miRNAs). Catalyzes the formation of N(7)-methylguanine at position 46 (m7G46) in a large subset of tRNAs that contain the 5'-RAGGU-3' motif within the variable loop. M7G46 interacts with C13-G22 in the D-loop to stabilize tRNA tertiary structure and protect tRNAs from decay. Also acts as a methyltransferase for a subset of internal N(7)-methylguanine in mRNAs. Internal N(7)-methylguanine methylation of mRNAs in response to stress promotes their relocalization to stress granules, thereby suppressing their translation. Also methylates a specific subset of miRNAs, such as let-7. N(7)-methylguanine methylation of let-7 miRNA promotes let-7 miRNA processing by disrupting an inhibitory secondary structure within the primary miRNA transcript (pri-miRNA). Acts as a regulator of embryonic stem cell self-renewal and differentiation. This Homo sapiens (Human) protein is tRNA (guanine-N(7)-)-methyltransferase.